Here is a 171-residue protein sequence, read N- to C-terminus: 3-hydroxydecanoyl-[acyl-carrier-protein] dehydratase (171 aa).

H70 is a catalytic residue.

Belongs to the thioester dehydratase family. FabA subfamily. In terms of assembly, homodimer.

It localises to the cytoplasm. The enzyme catalyses a (3R)-hydroxyacyl-[ACP] = a (2E)-enoyl-[ACP] + H2O. It carries out the reaction (3R)-hydroxydecanoyl-[ACP] = (2E)-decenoyl-[ACP] + H2O. The catalysed reaction is (2E)-decenoyl-[ACP] = (3Z)-decenoyl-[ACP]. It participates in lipid metabolism; fatty acid biosynthesis. Functionally, necessary for the introduction of cis unsaturation into fatty acids. Catalyzes the dehydration of (3R)-3-hydroxydecanoyl-ACP to E-(2)-decenoyl-ACP and then its isomerization to Z-(3)-decenoyl-ACP. Can catalyze the dehydratase reaction for beta-hydroxyacyl-ACPs with saturated chain lengths up to 16:0, being most active on intermediate chain length. The sequence is that of 3-hydroxydecanoyl-[acyl-carrier-protein] dehydratase from Pseudomonas aeruginosa (strain LESB58).